Here is a 437-residue protein sequence, read N- to C-terminus: Protein RecA (437 aa).

69–76 (GPESSGKT) contacts ATP. The segment at 343 to 437 (HDAAVRTSPD…GNGKSVKRKG (95 aa)) is disordered. Polar residues-rich tracts occupy residues 350–371 (SPDTNSRKVSGTGAVHTTSGSP), 380–391 (GAVNNSRDSTGG), and 400–426 (LNLSVNRDVSTDTVSSKISDATHNQKP).

The protein belongs to the RecA family.

Its subcellular location is the cytoplasm. In terms of biological role, can catalyze the hydrolysis of ATP in the presence of single-stranded DNA, the ATP-dependent uptake of single-stranded DNA by duplex DNA, and the ATP-dependent hybridization of homologous single-stranded DNAs. It interacts with LexA causing its activation and leading to its autocatalytic cleavage. This chain is Protein RecA, found in Tropheryma whipplei (strain Twist) (Whipple's bacillus).